The following is a 518-amino-acid chain: Probable Xaa-Pro aminopeptidase HCDG_07916 (518 aa).

Mn(2+) contacts are provided by D289, D300, E437, and E475.

Belongs to the peptidase M24B family. Mn(2+) is required as a cofactor.

It catalyses the reaction Release of any N-terminal amino acid, including proline, that is linked to proline, even from a dipeptide or tripeptide.. Catalyzes the removal of a penultimate prolyl residue from the N-termini of peptides. The sequence is that of Probable Xaa-Pro aminopeptidase HCDG_07916 from Ajellomyces capsulatus (strain H143) (Darling's disease fungus).